We begin with the raw amino-acid sequence, 345 residues long: Glycerol-3-phosphate dehydrogenase [NAD(P)+] (345 aa).

NADPH contacts are provided by Ser23, Tyr24, His44, and Lys118. Sn-glycerol 3-phosphate is bound by residues Lys118, Gly147, and Thr149. NADPH is bound at residue Ala151. Sn-glycerol 3-phosphate contacts are provided by Lys203, Asp256, Ser266, Arg267, and Asn268. Catalysis depends on Lys203, which acts as the Proton acceptor. An NADPH-binding site is contributed by Arg267. 2 residues coordinate NADPH: Val291 and Glu293.

This sequence belongs to the NAD-dependent glycerol-3-phosphate dehydrogenase family.

The protein resides in the cytoplasm. It catalyses the reaction sn-glycerol 3-phosphate + NAD(+) = dihydroxyacetone phosphate + NADH + H(+). It carries out the reaction sn-glycerol 3-phosphate + NADP(+) = dihydroxyacetone phosphate + NADPH + H(+). Its pathway is membrane lipid metabolism; glycerophospholipid metabolism. Functionally, catalyzes the reduction of the glycolytic intermediate dihydroxyacetone phosphate (DHAP) to sn-glycerol 3-phosphate (G3P), the key precursor for phospholipid synthesis. In Vibrio vulnificus (strain CMCP6), this protein is Glycerol-3-phosphate dehydrogenase [NAD(P)+].